Reading from the N-terminus, the 567-residue chain is UPF0313 protein Tpet_0582 (567 aa).

Residues 288 to 560 form the Radical SAM core domain; the sequence is KAIETVKFSI…NKMKENVLFK (273 aa). 3 residues coordinate [4Fe-4S] cluster: Cys-303, Cys-307, and Cys-310.

Belongs to the UPF0313 family. [4Fe-4S] cluster is required as a cofactor.

In Thermotoga petrophila (strain ATCC BAA-488 / DSM 13995 / JCM 10881 / RKU-1), this protein is UPF0313 protein Tpet_0582.